Here is a 194-residue protein sequence, read N- to C-terminus: Fe/S biogenesis protein NfuA (194 aa).

The [4Fe-4S] cluster site is built by cysteine 152 and cysteine 155.

Belongs to the NfuA family. In terms of assembly, homodimer. The cofactor is [4Fe-4S] cluster.

Its function is as follows. Involved in iron-sulfur cluster biogenesis. Binds a 4Fe-4S cluster, can transfer this cluster to apoproteins, and thereby intervenes in the maturation of Fe/S proteins. Could also act as a scaffold/chaperone for damaged Fe/S proteins. This Pseudomonas putida (strain ATCC 700007 / DSM 6899 / JCM 31910 / BCRC 17059 / LMG 24140 / F1) protein is Fe/S biogenesis protein NfuA.